We begin with the raw amino-acid sequence, 270 residues long: MRGQGRKESLSDSRDLDGSYDQLTGHPPGPTKKALKQRFLKLLPCCGPQALPSVSETLAVPASLRPHRPRPLDPDSVEDEFELSTVCHRPEGLEQLQEQTKFTRKELQVLYRGFKNECPSGIVNEENFKQIYSQFFPQGDSSTYATFLFNAFDTNHDGSVSFEDFVAGLSVILRGTIDDRLNWAFNLYDLNKDGCITKEEMLDIMKSIYDMMGKYTYPALREEAPREHVESFFQKMDRNKDGVVTIEEFIESCQKDENIMRSMQLFDNVI.

Over residues 1 to 17 (MRGQGRKESLSDSRDLD) the composition is skewed to basic and acidic residues. The segment at 1 to 33 (MRGQGRKESLSDSRDLDGSYDQLTGHPPGPTKK) is disordered. At S9 the chain carries Phosphoserine. S-palmitoyl cysteine attachment occurs at residues C45 and C46. Residues 81–137 (FELSTVCHRPEGLEQLQEQTKFTRKELQVLYRGFKNECPSGIVNEENFKQIYSQFFP) enclose the EF-hand 1; degenerate domain. EF-hand domains lie at 140 to 175 (DSSTYATFLFNAFDTNHDGSVSFEDFVAGLSVILRG), 176 to 211 (TIDDRLNWAFNLYDLNKDGCITKEEMLDIMKSIYDM), and 224 to 259 (APREHVESFFQKMDRNKDGVVTIEEFIESCQKDENI). Ca(2+) contacts are provided by D153, N155, D157, S159, D164, D189, N191, D193, C195, E200, D237, N239, D241, and E248. Residues 257-270 (ENIMRSMQLFDNVI) form an interaction with KCND2 region.

The protein belongs to the recoverin family. In terms of assembly, component of heteromultimeric potassium channels. Identified in potassium channel complexes containing KCND1, KCND2, KCND3, KCNIP1, KCNIP2, KCNIP3, KCNIP4, DPP6 and DPP10. The KCND2-KCNIP2 channel complex contains four KCND2 and four KCNIP2 subunits. Interacts with KCND2. Probably part of a complex consisting of KCNIP1, KCNIP2 isoform 3 and KCND2. At least isoform 2 and isoform 3 can self-associate to form homodimers and homotetramers. Isoform 3 interacts with KCNIP1 in a calcium-dependent manner. Interacts with KCND3; each KCNIP2 monomer interacts with two adjacent KCND3 subunits, through both the N-terminal inactivation ball of a KCND3 subunit and a C-terminal helix from the adjacent KCND3 subunit, clamping them together; this interaction modulates the channel gating kinetics. Palmitoylated. Palmitoylation enhances association with the plasma membrane. Expressed in heart ventricle with isoform 1 as most prominent form.

Its subcellular location is the cell membrane. Functionally, regulatory subunit of Kv4/D (Shal)-type voltage-gated rapidly inactivating A-type potassium channels. Modulates channel density, inactivation kinetics and rate of recovery from inactivation in a calcium-dependent and isoform-specific manner. Involved in KCND2 and KCND3 trafficking to the cell surface. May be required for the expression of I(To) currents in the heart. The polypeptide is A-type potassium channel modulatory protein KCNIP2 (Mustela putorius furo (European domestic ferret)).